Consider the following 141-residue polypeptide: Guanyl-specific ribonuclease Sa3 (141 aa).

A signal peptide (or 43) is located at residues 1-36; the sequence is MRIPPRLVALAGAAAVAATLIAGPVAAAAPASHAVA. Residues Cys52 and Cys141 are joined by a disulfide bond. Residue Glu99 is the Proton acceptor of the active site. His130 functions as the Proton donor in the catalytic mechanism.

It belongs to the ribonuclease N1/T1 family.

It localises to the secreted. The enzyme catalyses [RNA] containing guanosine + H2O = an [RNA fragment]-3'-guanosine-3'-phosphate + a 5'-hydroxy-ribonucleotide-3'-[RNA fragment].. This chain is Guanyl-specific ribonuclease Sa3 (rnaSA3), found in Kitasatospora aureofaciens (Streptomyces aureofaciens).